Reading from the N-terminus, the 427-residue chain is Serine--tRNA ligase (427 aa).

231 to 233 (TAE) is a binding site for L-serine. Residue 262–264 (RSE) coordinates ATP. Glu-285 contacts L-serine. 349–352 (EISS) is a binding site for ATP. Ser-385 is an L-serine binding site.

This sequence belongs to the class-II aminoacyl-tRNA synthetase family. Type-1 seryl-tRNA synthetase subfamily. Homodimer. The tRNA molecule binds across the dimer.

It localises to the cytoplasm. The catalysed reaction is tRNA(Ser) + L-serine + ATP = L-seryl-tRNA(Ser) + AMP + diphosphate + H(+). The enzyme catalyses tRNA(Sec) + L-serine + ATP = L-seryl-tRNA(Sec) + AMP + diphosphate + H(+). It functions in the pathway aminoacyl-tRNA biosynthesis; selenocysteinyl-tRNA(Sec) biosynthesis; L-seryl-tRNA(Sec) from L-serine and tRNA(Sec): step 1/1. Catalyzes the attachment of serine to tRNA(Ser). Is also able to aminoacylate tRNA(Sec) with serine, to form the misacylated tRNA L-seryl-tRNA(Sec), which will be further converted into selenocysteinyl-tRNA(Sec). In Staphylococcus saprophyticus subsp. saprophyticus (strain ATCC 15305 / DSM 20229 / NCIMB 8711 / NCTC 7292 / S-41), this protein is Serine--tRNA ligase.